The primary structure comprises 81 residues: Cytotoxin 1b (81 aa).

Positions M1–T21 are cleaved as a signal peptide. 4 cysteine pairs are disulfide-bonded: C24/C42, C35/C59, C63/C74, and C75/C80.

It belongs to the three-finger toxin family. Short-chain subfamily. Type IA cytotoxin sub-subfamily. Monomer in solution; Homodimer and oligomer in the presence of negatively charged lipids forming a pore with a size ranging between 20 and 30 Angstroms. As to expression, expressed by the venom gland.

The protein localises to the secreted. It localises to the target cell membrane. Its function is as follows. Shows cytolytic activity on many different cells by forming pore in lipid membranes. In vivo, increases heart rate or kills the animal by cardiac arrest. In addition, it binds to heparin with high affinity, interacts with Kv channel-interacting protein 1 (KCNIP1) in a calcium-independent manner, and binds to integrin alpha-V/beta-3 (ITGAV/ITGB3) with moderate affinity. This chain is Cytotoxin 1b, found in Naja atra (Chinese cobra).